A 173-amino-acid chain; its full sequence is Shikimate kinase (173 aa).

Residue 14–19 (GAGKST) participates in ATP binding. Serine 18 is a Mg(2+) binding site. Aspartate 36, arginine 60, and glycine 82 together coordinate substrate. Lysine 120 lines the ATP pocket. Arginine 140 lines the substrate pocket.

It belongs to the shikimate kinase family. As to quaternary structure, monomer. The cofactor is Mg(2+).

Its subcellular location is the cytoplasm. The catalysed reaction is shikimate + ATP = 3-phosphoshikimate + ADP + H(+). The protein operates within metabolic intermediate biosynthesis; chorismate biosynthesis; chorismate from D-erythrose 4-phosphate and phosphoenolpyruvate: step 5/7. Its function is as follows. Catalyzes the specific phosphorylation of the 3-hydroxyl group of shikimic acid using ATP as a cosubstrate. This chain is Shikimate kinase (aroK), found in Wigglesworthia glossinidia brevipalpis.